The following is a 431-amino-acid chain: Glutamyl-tRNA reductase (431 aa).

Substrate contacts are provided by residues 49–52, serine 109, 114–116, and glutamine 120; these read TCNR and EGQ. The active-site Nucleophile is the cysteine 50. 189–194 serves as a coordination point for NADP(+); that stretch reads GAGKMS.

This sequence belongs to the glutamyl-tRNA reductase family. As to quaternary structure, homodimer.

The catalysed reaction is (S)-4-amino-5-oxopentanoate + tRNA(Glu) + NADP(+) = L-glutamyl-tRNA(Glu) + NADPH + H(+). The protein operates within porphyrin-containing compound metabolism; protoporphyrin-IX biosynthesis; 5-aminolevulinate from L-glutamyl-tRNA(Glu): step 1/2. Its pathway is porphyrin-containing compound metabolism; chlorophyll biosynthesis. Catalyzes the NADPH-dependent reduction of glutamyl-tRNA(Glu) to glutamate 1-semialdehyde (GSA). The chain is Glutamyl-tRNA reductase from Trichodesmium erythraeum (strain IMS101).